Here is a 423-residue protein sequence, read N- to C-terminus: Serine--tRNA ligase (423 aa).

230–232 is a binding site for L-serine; that stretch reads TAE. 261 to 263 serves as a coordination point for ATP; the sequence is RQE. Glutamate 284 contacts L-serine. 348-351 provides a ligand contact to ATP; sequence EISS. Position 384 (serine 384) interacts with L-serine.

The protein belongs to the class-II aminoacyl-tRNA synthetase family. Type-1 seryl-tRNA synthetase subfamily. As to quaternary structure, homodimer. The tRNA molecule binds across the dimer.

It localises to the cytoplasm. The catalysed reaction is tRNA(Ser) + L-serine + ATP = L-seryl-tRNA(Ser) + AMP + diphosphate + H(+). It catalyses the reaction tRNA(Sec) + L-serine + ATP = L-seryl-tRNA(Sec) + AMP + diphosphate + H(+). The protein operates within aminoacyl-tRNA biosynthesis; selenocysteinyl-tRNA(Sec) biosynthesis; L-seryl-tRNA(Sec) from L-serine and tRNA(Sec): step 1/1. Functionally, catalyzes the attachment of serine to tRNA(Ser). Is also able to aminoacylate tRNA(Sec) with serine, to form the misacylated tRNA L-seryl-tRNA(Sec), which will be further converted into selenocysteinyl-tRNA(Sec). The polypeptide is Serine--tRNA ligase (Thermoanaerobacter pseudethanolicus (strain ATCC 33223 / 39E) (Clostridium thermohydrosulfuricum)).